The chain runs to 63 residues: DNA-directed RNA polymerases I, II, and III subunit RPABC4 (63 aa).

The Zn(2+) site is built by cysteine 24, cysteine 27, cysteine 41, and cysteine 44. Residues cysteine 24–cysteine 44 form a C4-type zinc finger.

This sequence belongs to the archaeal Rpo12/eukaryotic RPC10 RNA polymerase subunit family. In terms of assembly, component of the RNA polymerase I (Pol I), RNA polymerase II (Pol II) and RNA polymerase III (Pol III) complexes consisting of 14, 12 and 17 subunits, respectively.

It localises to the nucleus. In terms of biological role, DNA-dependent RNA polymerase catalyzes the transcription of DNA into RNA using the four ribonucleoside triphosphates as substrates. Common component of RNA polymerases I, II and III which synthesize ribosomal RNA precursors, mRNA precursors and many functional non-coding RNAs, and a small RNAs, such as 5S rRNA and tRNAs, respectively. The chain is DNA-directed RNA polymerases I, II, and III subunit RPABC4 (rpc10) from Schizosaccharomyces pombe (strain 972 / ATCC 24843) (Fission yeast).